The following is a 193-amino-acid chain: Cysteine and glycine-rich protein 2 (193 aa).

Positions 10-61 (CGACGRTVYHAEEVQCDGRSFHRCCFLCMVCRKNLDSTTVAIHDEEIYCKSC) constitute an LIM zinc-binding 1 domain. The short motif at 64–69 (KKYGPK) is the Nuclear localization signal element. A Glycyl lysine isopeptide (Lys-Gly) (interchain with G-Cter in SUMO2) cross-link involves residue Lys-91. 2 positions are modified to N6-acetyllysine: Lys-112 and Lys-131. Residues 119 to 170 (CSRCGDSVYAAEKIIGAGKPWHKNCFRCAKCGKSLESTTLTEKEGEIYCKGC) form the LIM zinc-binding 2 domain. At Lys-137 the chain carries N6-acetyllysine; alternate. Lys-137 bears the N6-succinyllysine; alternate mark. Lys-161 is modified (N6-acetyllysine).

In terms of assembly, interacts with KAT14. The LIM domain 1 is necessary and sufficient for this interaction. Interacts with GLRX3.

It is found in the nucleus. In terms of biological role, drastically down-regulated in response to PDGF-BB or cell injury, that promote smooth muscle cell proliferation and dedifferentiation. Seems to play a role in the development of the embryonic vascular system. This Mus musculus (Mouse) protein is Cysteine and glycine-rich protein 2 (Csrp2).